The chain runs to 384 residues: MSSVPAPREYFLDSIRAWLMLLGIPFHISLIYSTHSWHVNSATPSWWLTLFNDFIHAFRMQVFFVISGYFSYMLFLRYPLKRWWKVRVERVGIPMLTAIPLLTLPQFILLQYVKEKTENWPTLSAYEKYNTLAWELISHLWFLLVLVILTTVSIGIFTWFQKRQETSKPRPAAISLARLSLIFFLLGMAYAAIRRIIFIVYPAILSDGMFNFIVMQTLFYVPFFILGALAFIHPDLKARFTTPSRGCTLGAAVAFIAYLLNQRYGSGDAWMYETESVITMVMGLWMVNVVFSLGHRLLNFQSARVTYFVNASLFIYLVHHPLTLFFGAYITPHISSNLIGFLCGLIFVMGIALILYEIHLRIPLLKFLFSGKPPVKQESRAAIG.

Transmembrane regions (helical) follow at residues 17-37 (AWLM…THSW), 54-74 (FIHA…SYML), 91-111 (VGIP…ILLQ), 140-160 (LWFL…FTWF), 173-193 (AISL…YAAI), 212-232 (FIVM…LAFI), 240-260 (FTTP…AYLL), 274-294 (TESV…FSLG), 311-331 (ASLF…AYIT), and 338-358 (LIGF…LYEI).

This sequence belongs to the acyltransferase 3 family. OpgC subfamily.

Its subcellular location is the cell membrane. The protein operates within glycan metabolism; osmoregulated periplasmic glucan (OPG) biosynthesis. In terms of biological role, necessary for the succinyl substitution of periplasmic glucans. Could catalyze the transfer of succinyl residues from the cytoplasmic side of the membrane to the nascent glucan backbones on the periplasmic side of the membrane. The polypeptide is Glucans biosynthesis protein C (Salmonella agona (strain SL483)).